The sequence spans 411 residues: MERIPSAQPPPTCLPKAPGLEHGDLSGMDFAHMYQVYKSRRGIKRSEDSKETYKLPHRLIEKKRRDRINECIAQLKDLLPEHLKLTTLGHLEKAVVLELTLKHVKALTNLIDQQQQKIIALQSGLQAGDLSGRNLEAGQEMFCSGFQTCAREVLQYLAKHENTRDLKSSQLVTHLHRVVSELLQGGASRKPLDSAPKAVDLKEKPSFLAKGSEGPGKNCVPVIQRTFAPSGGEQSGSDTDTDSGYGGELEKGDLRSEQPYFKSDHGRRFAVGERVSTIKQESEEPPTKKSRMQLSEEEGHFAGSDLMGSPFLGPHPHQPPFCLPFYLIPPSATAYLPMLEKCWYPTSVPVLYPGLNTSAAALSSFMNPDKIPTPLLLPQRLPSPLAHSSLDSSALLQALKQIPPLNLETKD.

The disordered stretch occupies residues 1 to 20 (MERIPSAQPPPTCLPKAPGL). Positions 1–139 (MERIPSAQPP…LSGRNLEAGQ (139 aa)) are essential for interaction with BMAL1, E-box binding and repressor activity against the CLOCK-BMAL1 heterodimer. The 56-residue stretch at 52–107 (TYKLPHRLIEKKRRDRINECIAQLKDLLPEHLKLTTLGHLEKAVVLELTLKHVKAL) folds into the bHLH domain. A necessary for interaction with RXRA and repressor activity against RXRA region spans residues 75–79 (LKDLL). The Orange domain maps to 142–175 (FCSGFQTCAREVLQYLAKHENTRDLKSSQLVTHL). Lys159 is covalently cross-linked (Glycyl lysine isopeptide (Lys-Gly) (interchain with G-Cter in SUMO1, SUMO2 and SUMO3)). Lys167 participates in a covalent cross-link: Glycyl lysine isopeptide (Lys-Gly) (interchain with G-Cter in SUMO2). A disordered region spans residues 227–294 (FAPSGGEQSG…PPTKKSRMQL (68 aa)). Ser235 carries the phosphoserine modification. Positions 248-271 (ELEKGDLRSEQPYFKSDHGRRFAV) are enriched in basic and acidic residues. Residue Lys279 forms a Glycyl lysine isopeptide (Lys-Gly) (interchain with G-Cter in SUMO1); alternate linkage. Lys279 participates in a covalent cross-link: Glycyl lysine isopeptide (Lys-Gly) (interchain with G-Cter in SUMO1, SUMO2 and SUMO3); alternate. Lys279 participates in a covalent cross-link: Glycyl lysine isopeptide (Lys-Gly) (interchain with G-Cter in SUMO2); alternate. Lys288 is covalently cross-linked (Glycyl lysine isopeptide (Lys-Gly) (interchain with G-Cter in SUMO2)). Ser383 is subject to Phosphoserine.

In terms of assembly, homodimer. Heterodimer with BHLHE41/DEC2. Interacts with ubiquitin-conjugating enzyme UBE2I/UBC9. Interacts with HDAC1, SUMO1, RXRA and BMAL1. Interacts with TCF3/E47. In terms of processing, ubiquitinated; which may lead to proteasomal degradation. Sumoylation inhibits its ubiquitination and promotes its negative regulation of the CLOCK-BMAL1 heterodimer transcriptional activator activity.

Its subcellular location is the cytoplasm. The protein resides in the nucleus. In terms of biological role, transcriptional repressor involved in the regulation of the circadian rhythm by negatively regulating the activity of the clock genes and clock-controlled genes. Acts as the negative limb of a novel autoregulatory feedback loop (DEC loop) which differs from the one formed by the PER and CRY transcriptional repressors (PER/CRY loop). Both these loops are interlocked as it represses the expression of PER1/2 and in turn is repressed by PER1/2 and CRY1/2. Represses the activity of the circadian transcriptional activator: CLOCK-BMAL1|BMAL2 heterodimer by competing for the binding to E-box elements (5'-CACGTG-3') found within the promoters of its target genes. Negatively regulates its own expression and the expression of DBP and BHLHE41/DEC2. Acts as a corepressor of RXR and the RXR-LXR heterodimers and represses the ligand-induced RXRA and NR1H3/LXRA transactivation activity. May function as a transcriptional factor for neuronal differentiation. Represses the transcription of NR0B2 and attentuates the transactivation of NR0B2 by the CLOCK-BMAL1 complex. Drives the circadian rhythm of blood pressure through transcriptional repression of ATP1B1 in the cardiovascular system. The protein is Class E basic helix-loop-helix protein 40 (Bhlhe40) of Mus musculus (Mouse).